The following is a 454-amino-acid chain: Bifunctional protein GlmU (454 aa).

A pyrophosphorylase region spans residues methionine 1–arginine 226. UDP-N-acetyl-alpha-D-glucosamine contacts are provided by residues leucine 8 to glycine 11, lysine 22, glutamine 73, glycine 78 to threonine 79, tyrosine 100 to aspartate 102, glycine 137, glutamate 151, asparagine 166, and asparagine 224. Residue aspartate 102 coordinates Mg(2+). Asparagine 224 is a Mg(2+) binding site. Residues leucine 227–glutamine 247 are linker. Positions glycine 248–lysine 454 are N-acetyltransferase. The UDP-N-acetyl-alpha-D-glucosamine site is built by arginine 330 and lysine 348. Catalysis depends on histidine 360, which acts as the Proton acceptor. Residues tyrosine 363 and asparagine 374 each coordinate UDP-N-acetyl-alpha-D-glucosamine. Residues alanine 377, asparagine 383–tyrosine 384, serine 402, alanine 420, and arginine 437 contribute to the acetyl-CoA site.

In the N-terminal section; belongs to the N-acetylglucosamine-1-phosphate uridyltransferase family. The protein in the C-terminal section; belongs to the transferase hexapeptide repeat family. As to quaternary structure, homotrimer. The cofactor is Mg(2+).

It is found in the cytoplasm. The enzyme catalyses alpha-D-glucosamine 1-phosphate + acetyl-CoA = N-acetyl-alpha-D-glucosamine 1-phosphate + CoA + H(+). The catalysed reaction is N-acetyl-alpha-D-glucosamine 1-phosphate + UTP + H(+) = UDP-N-acetyl-alpha-D-glucosamine + diphosphate. The protein operates within nucleotide-sugar biosynthesis; UDP-N-acetyl-alpha-D-glucosamine biosynthesis; N-acetyl-alpha-D-glucosamine 1-phosphate from alpha-D-glucosamine 6-phosphate (route II): step 2/2. It functions in the pathway nucleotide-sugar biosynthesis; UDP-N-acetyl-alpha-D-glucosamine biosynthesis; UDP-N-acetyl-alpha-D-glucosamine from N-acetyl-alpha-D-glucosamine 1-phosphate: step 1/1. It participates in bacterial outer membrane biogenesis; LPS lipid A biosynthesis. Its function is as follows. Catalyzes the last two sequential reactions in the de novo biosynthetic pathway for UDP-N-acetylglucosamine (UDP-GlcNAc). The C-terminal domain catalyzes the transfer of acetyl group from acetyl coenzyme A to glucosamine-1-phosphate (GlcN-1-P) to produce N-acetylglucosamine-1-phosphate (GlcNAc-1-P), which is converted into UDP-GlcNAc by the transfer of uridine 5-monophosphate (from uridine 5-triphosphate), a reaction catalyzed by the N-terminal domain. In Acinetobacter baylyi (strain ATCC 33305 / BD413 / ADP1), this protein is Bifunctional protein GlmU.